Reading from the N-terminus, the 1039-residue chain is FHIP family protein GG24907 (1039 aa).

Phosphoserine occurs at positions 498 and 805. 3 disordered regions span residues 831 to 877 (ATPT…SASS), 904 to 945 (GISQ…SNSS), and 957 to 984 (SNTT…SEPA). Composition is skewed to polar residues over residues 855 to 877 (TSMF…SASS) and 904 to 924 (GISQ…TQPQ). Low complexity predominate over residues 925–945 (AGASRTGATATSAAASGSNSS). Residues 957–966 (SNTTTHSAST) are compositionally biased toward polar residues.

This sequence belongs to the FHIP family.

The chain is FHIP family protein GG24907 from Drosophila erecta (Fruit fly).